Consider the following 206-residue polypeptide: Small ribosomal subunit protein uS4 (206 aa).

In terms of domain architecture, S4 RNA-binding spans R94 to L156.

It belongs to the universal ribosomal protein uS4 family. Part of the 30S ribosomal subunit. Contacts protein S5. The interaction surface between S4 and S5 is involved in control of translational fidelity.

One of the primary rRNA binding proteins, it binds directly to 16S rRNA where it nucleates assembly of the body of the 30S subunit. In terms of biological role, with S5 and S12 plays an important role in translational accuracy. The chain is Small ribosomal subunit protein uS4 from Roseiflexus castenholzii (strain DSM 13941 / HLO8).